The following is a 504-amino-acid chain: ATP synthase subunit alpha, chloroplastic (504 aa).

170–177 (GDRQTGKT) lines the ATP pocket.

This sequence belongs to the ATPase alpha/beta chains family. In terms of assembly, F-type ATPases have 2 components, CF(1) - the catalytic core - and CF(0) - the membrane proton channel. CF(1) has five subunits: alpha(3), beta(3), gamma(1), delta(1), epsilon(1). CF(0) has four main subunits: a, b, b' and c.

The protein localises to the plastid. It localises to the chloroplast thylakoid membrane. The enzyme catalyses ATP + H2O + 4 H(+)(in) = ADP + phosphate + 5 H(+)(out). Produces ATP from ADP in the presence of a proton gradient across the membrane. The alpha chain is a regulatory subunit. The chain is ATP synthase subunit alpha, chloroplastic from Triticum aestivum (Wheat).